Reading from the N-terminus, the 361-residue chain is Histidinol-phosphate aminotransferase (361 aa).

At lysine 218 the chain carries N6-(pyridoxal phosphate)lysine.

It belongs to the class-II pyridoxal-phosphate-dependent aminotransferase family. Histidinol-phosphate aminotransferase subfamily. Homodimer. Pyridoxal 5'-phosphate serves as cofactor.

The enzyme catalyses L-histidinol phosphate + 2-oxoglutarate = 3-(imidazol-4-yl)-2-oxopropyl phosphate + L-glutamate. The protein operates within amino-acid biosynthesis; L-histidine biosynthesis; L-histidine from 5-phospho-alpha-D-ribose 1-diphosphate: step 7/9. The protein is Histidinol-phosphate aminotransferase of Ruegeria pomeroyi (strain ATCC 700808 / DSM 15171 / DSS-3) (Silicibacter pomeroyi).